Reading from the N-terminus, the 613-residue chain is Zinc finger protein 665 (613 aa).

C2H2-type zinc fingers lie at residues 113-135, 141-163, 169-191, 197-219, 225-247, 253-275, 281-303, 309-331, 337-359, 365-387, 393-415, 421-443, 449-471, 477-499, 505-527, 533-555, 561-583, and 589-611; these read YKCD…KRIH, YRCN…QVIH, YKCN…QRIH, YKCN…QVIH, YKCN…RRIH, YKCN…QTIH, YKCN…RRVH, YKCN…QIIH, FKCN…RRIH, YRCD…QAIH, YKCN…RGIH, YKCD…WRVH, and YRCN…MAIH.

Belongs to the krueppel C2H2-type zinc-finger protein family.

The protein resides in the nucleus. In terms of biological role, may be involved in transcriptional regulation. In Pongo abelii (Sumatran orangutan), this protein is Zinc finger protein 665 (ZNF665).